A 186-amino-acid polypeptide reads, in one-letter code: UPF0301 protein Swoo_1337 (186 aa).

It belongs to the UPF0301 (AlgH) family.

This chain is UPF0301 protein Swoo_1337, found in Shewanella woodyi (strain ATCC 51908 / MS32).